The sequence spans 417 residues: UDP-N-acetylmuramoylalanine--D-glutamate ligase (417 aa).

101–107 (GTAGKTS) provides a ligand contact to ATP.

The protein belongs to the MurCDEF family.

Its subcellular location is the cytoplasm. The catalysed reaction is UDP-N-acetyl-alpha-D-muramoyl-L-alanine + D-glutamate + ATP = UDP-N-acetyl-alpha-D-muramoyl-L-alanyl-D-glutamate + ADP + phosphate + H(+). The protein operates within cell wall biogenesis; peptidoglycan biosynthesis. Cell wall formation. Catalyzes the addition of glutamate to the nucleotide precursor UDP-N-acetylmuramoyl-L-alanine (UMA). This Thermus thermophilus (strain ATCC BAA-163 / DSM 7039 / HB27) protein is UDP-N-acetylmuramoylalanine--D-glutamate ligase.